A 96-amino-acid chain; its full sequence is MQLYTYLYLLVPLVTFHLILGTGTLDHGDALTERRSADATALKPEPVLLQKSSARSTDDNGKDTQMKRIFKKRRNKARGEEELSENAVEFARELAN.

The N-terminal stretch at 1–21 is a signal peptide; the sequence is MQLYTYLYLLVPLVTFHLILG. The propeptide occupies 22–78; that stretch reads TGTLDHGDALTERRSADATALKPEPVLLQKSSARSTDDNGKDTQMKRIFKKRRNKAR. A disordered region spans residues 36-85; sequence SADATALKPEPVLLQKSSARSTDDNGKDTQMKRIFKKRRNKARGEEELSE. A compositionally biased stretch (basic and acidic residues) spans 56-66; sequence STDDNGKDTQM. Glu-81 lines the a divalent metal cation pocket. 4-carboxyglutamate occurs at positions 81, 82, 85, 89, and 93. 3 residues coordinate a divalent metal cation: Glu-85, Glu-89, and Glu-93. Asn-96 carries the asparagine amide modification.

Belongs to the conotoxin B superfamily. The cofactor is Ca(2+). It depends on Mg(2+) as a cofactor. Expressed by the venom duct.

It is found in the secreted. Conantokins inhibit N-methyl-D-aspartate (NMDA) receptors. This toxin has antagonist activity on NR2B/GRIN2B (IC(50)=1.4 uM) and NR2A/GRIN2A (IC(50)=2.9 uM) subunits, when tested on rat receptors. This Conus rolani (Cone snail) protein is Conantokin Rl-C.